Here is a 391-residue protein sequence, read N- to C-terminus: Phosphoglycerate kinase (391 aa).

Residues aspartate 21–asparagine 23, arginine 36, histidine 59–arginine 62, arginine 113, and arginine 146 contribute to the substrate site. Residues lysine 197, glutamate 319, and glycine 345–threonine 348 contribute to the ATP site.

The protein belongs to the phosphoglycerate kinase family. In terms of assembly, monomer.

The protein localises to the cytoplasm. The catalysed reaction is (2R)-3-phosphoglycerate + ATP = (2R)-3-phospho-glyceroyl phosphate + ADP. Its pathway is carbohydrate degradation; glycolysis; pyruvate from D-glyceraldehyde 3-phosphate: step 2/5. This is Phosphoglycerate kinase from Chromobacterium violaceum (strain ATCC 12472 / DSM 30191 / JCM 1249 / CCUG 213 / NBRC 12614 / NCIMB 9131 / NCTC 9757 / MK).